The sequence spans 313 residues: 3-ketodihydrosphingosine reductase TSC10 (313 aa).

Position 12 (L12) interacts with NADP(+). NADPH contacts are provided by G15, S17, and G19. Positions 15–19 (GGSQG) match the GXSXG motif. L20 is a binding site for NADP(+). Residues R47, K51, and D86 each contribute to the NADPH site. D86 contributes to the NADP(+) binding site. Residue S160 is the Proton donor of the active site. The NADP(+) site is built by Y174, K178, and S207. Y174 serves as the catalytic Proton acceptor. K178 functions as the Lowers pKa of active site Tyr in the catalytic mechanism. Residues 278–298 (VFSWILGALLNITIVPIYMLI) traverse the membrane as a helical segment.

It belongs to the short-chain dehydrogenases/reductases (SDR) family.

The protein resides in the endoplasmic reticulum membrane. It carries out the reaction sphinganine + NADP(+) = 3-oxosphinganine + NADPH + H(+). It functions in the pathway lipid metabolism; sphingolipid metabolism. Catalyzes the reduction of 3'-oxosphinganine (3-ketodihydrosphingosine/KDS) to sphinganine (dihydrosphingosine/DHS), the second step of de novo sphingolipid biosynthesis. This chain is 3-ketodihydrosphingosine reductase TSC10 (TSC10), found in Kluyveromyces lactis (strain ATCC 8585 / CBS 2359 / DSM 70799 / NBRC 1267 / NRRL Y-1140 / WM37) (Yeast).